The following is a 300-amino-acid chain: Mycothiol acetyltransferase (300 aa).

2 N-acetyltransferase domains span residues 4 to 140 (IDWR…RPLT) and 151 to 300 (VRLA…AVAD). Asp36 is a binding site for 1D-myo-inositol 2-(L-cysteinylamino)-2-deoxy-alpha-D-glucopyranoside. 79–81 (LVV) is a binding site for acetyl-CoA. 1D-myo-inositol 2-(L-cysteinylamino)-2-deoxy-alpha-D-glucopyranoside contacts are provided by Glu178, Lys219, and Glu227. 231–233 (VGV) contacts acetyl-CoA. Tyr269 contributes to the 1D-myo-inositol 2-(L-cysteinylamino)-2-deoxy-alpha-D-glucopyranoside binding site. 274–279 (NGAAVK) is an acetyl-CoA binding site.

The protein belongs to the acetyltransferase family. MshD subfamily. Monomer.

It carries out the reaction 1D-myo-inositol 2-(L-cysteinylamino)-2-deoxy-alpha-D-glucopyranoside + acetyl-CoA = mycothiol + CoA + H(+). Its function is as follows. Catalyzes the transfer of acetyl from acetyl-CoA to desacetylmycothiol (Cys-GlcN-Ins) to form mycothiol. This is Mycothiol acetyltransferase from Mycobacterium sp. (strain JLS).